The primary structure comprises 595 residues: E3 ubiquitin-protein ligase synoviolin B (595 aa).

A helical membrane pass occupies residues 1 to 19; it reads MTGASLALTASVVAHAYYL. Residues 20-35 lie on the Lumenal side of the membrane; it reads KNQFYPTVVYLTKSSP. The chain crosses the membrane as a helical span at residues 36 to 56; it reads SMAILYIQAFVLVFLLGKFMG. Residues 57-92 lie on the Cytoplasmic side of the membrane; sequence KVFFGQLRAAEMEHLLERSWYAVTETCLAFTVFRDD. Residues 93 to 113 traverse the membrane as a helical segment; that stretch reads FSPRFVALFTLLLFLKCFHWL. Topologically, residues 114–129 are lumenal; sequence AEDRVDFMERSPNISW. Residues 130-150 form a helical membrane-spanning segment; it reads LFHFRILALMLLLGVLDAFFV. Residues 151–163 lie on the Cytoplasmic side of the membrane; the sequence is SHAYNSLVTRGAS. The chain crosses the membrane as a helical span at residues 164-184; the sequence is VQLVFGFEYAILMTMILAVFI. The Lumenal segment spans residues 185–218; it reads KYILHSVDLQSENPWDNKAVYMLYTELFTGFIKV. Residues 219-239 form a helical membrane-spanning segment; sequence LLYMAFMTIMVKVHTFPLFAI. Residues 230 to 264 form an interaction with p53/TP53 region; sequence KVHTFPLFAIRPMYLAMRQFKKAVTDAVMSRRAIR. The Cytoplasmic portion of the chain corresponds to 240 to 595; the sequence is RPMYLAMRQF…LQKLETTDSQ (356 aa). Zn(2+)-binding residues include cysteine 285, cysteine 288, cysteine 301, histidine 303, histidine 306, cysteine 309, cysteine 320, and cysteine 323. The RING-type; atypical zinc finger occupies 285 to 324; it reads CIICREEMVSGAKRLPCNHIFHTSCLRSWFQRQQTCPTCR. A compositionally biased stretch (low complexity) spans 335–353; the sequence is QPQTPAEQQNQHQAQQQPT. 2 disordered regions span residues 335 to 370 and 386 to 426; these read QPQT…LPPF and PVPG…PGAA. Positions 354–370 are enriched in pro residues; it reads PVVPPQPNFPPGMLPPF. Over residues 390–408 the composition is skewed to low complexity; that stretch reads APVGNPPDEANPGSSSGSS. Residues 463 to 494 adopt a coiled-coil conformation; sequence EELRAMEGHERQNLEARLQCLQNIHTLLDAAM. Residues 509-595 are disordered; that stretch reads PPQPPVSSSS…LQKLETTDSQ (87 aa). A compositionally biased stretch (low complexity) spans 514 to 552; sequence VSSSSSSSASASTEPTTSSVSEPVIDTSSIVTTDSSQQS.

It belongs to the HRD1 family. As to quaternary structure, homodimer.

It localises to the endoplasmic reticulum membrane. The enzyme catalyses S-ubiquitinyl-[E2 ubiquitin-conjugating enzyme]-L-cysteine + [acceptor protein]-L-lysine = [E2 ubiquitin-conjugating enzyme]-L-cysteine + N(6)-ubiquitinyl-[acceptor protein]-L-lysine.. The protein operates within protein modification; protein ubiquitination. In terms of biological role, E3 ubiquitin-protein ligase which accepts ubiquitin specifically from endoplasmic reticulum-associated UBC7 E2 ligase and transfers it to substrates, promoting their degradation. Component of the endoplasmic reticulum quality control (ERQC) system also called ER-associated degradation (ERAD) involved in ubiquitin-dependent degradation of misfolded endoplasmic reticulum proteins. Also promotes the degradation of normal but naturally short-lived proteins. Protects cells from ER stress-induced apoptosis. Sequesters p53 in the cytoplasm and promotes its degradation, thereby negatively regulating its biological function in transcription, cell cycle regulation and apoptosis. In Xenopus laevis (African clawed frog), this protein is E3 ubiquitin-protein ligase synoviolin B (syvn1-b).